A 693-amino-acid polypeptide reads, in one-letter code: Golgin subfamily A member 6B (693 aa).

Pro residues predominate over residues 1–11; the sequence is MWPQPYLPPHP. Disordered regions lie at residues 1-72, 497-551, 629-650, and 660-679; these read MWPQ…SQYQ, LPGE…VERR, NPAD…AGEQ, and NNVE…DNPT. A coiled-coil region spans residues 77 to 611; the sequence is ALESSSVTIS…KLLELQELVL (535 aa). Residues 537–551 show a composition bias toward basic and acidic residues; it reads LPKEKADGTEQVERR.

This sequence belongs to the GOLGA6 family.

The sequence is that of Golgin subfamily A member 6B (GOLGA6B) from Homo sapiens (Human).